A 108-amino-acid polypeptide reads, in one-letter code: Iron-sulfur cluster assembly protein CyaY (108 aa).

It belongs to the frataxin family.

In terms of biological role, involved in iron-sulfur (Fe-S) cluster assembly. May act as a regulator of Fe-S biogenesis. This is Iron-sulfur cluster assembly protein CyaY from Burkholderia orbicola (strain MC0-3).